A 218-amino-acid polypeptide reads, in one-letter code: 7-cyano-7-deazaguanine synthase (218 aa).

ATP is bound at residue phenylalanine 10–leucine 20. Cysteine 186, cysteine 195, cysteine 198, and cysteine 201 together coordinate Zn(2+).

The protein belongs to the QueC family. As to quaternary structure, homodimer. Zn(2+) is required as a cofactor.

It carries out the reaction 7-carboxy-7-deazaguanine + NH4(+) + ATP = 7-cyano-7-deazaguanine + ADP + phosphate + H2O + H(+). Its pathway is purine metabolism; 7-cyano-7-deazaguanine biosynthesis. Functionally, catalyzes the ATP-dependent conversion of 7-carboxy-7-deazaguanine (CDG) to 7-cyano-7-deazaguanine (preQ(0)). The sequence is that of 7-cyano-7-deazaguanine synthase from Exiguobacterium sibiricum (strain DSM 17290 / CCUG 55495 / CIP 109462 / JCM 13490 / 255-15).